Reading from the N-terminus, the 309-residue chain is Olfactory receptor 8U1 (309 aa).

Topologically, residues 1-25 (MAHINCTQATEFILVGLTDHQELKM) are extracellular. The N-linked (GlcNAc...) asparagine glycan is linked to Asn-5. A helical transmembrane segment spans residues 26–46 (PLFVLFLSIYLFTVVGNLGLI). Topologically, residues 47 to 54 (LLIRADTS) are cytoplasmic. Residues 55–75 (LNTPMYFFLSNLAFVDFCYSS) form a helical membrane-spanning segment. Residues 76-99 (VITPKMLGNFLYKQNVISFDACAT) lie on the Extracellular side of the membrane. Cysteines 97 and 189 form a disulfide. Residues 100–120 (QLGCFLTFMISESLLLASMAY) form a helical membrane-spanning segment. At 121–139 (DRYVAICNPLLYMVVMTPG) the chain is on the cytoplasmic side. A helical membrane pass occupies residues 140–160 (ICIQLVAVPYSYSFLMALFHT). The Extracellular portion of the chain corresponds to 161–197 (ILTFRLSYCHSNIVNHFYCDDMPLLRLTCSDTRFKQL). A helical transmembrane segment spans residues 198–217 (WIFACAGIMFISSLLIVFVS). At 218–237 (YMFIISAILRMHSAEGRQKA) the chain is on the cytoplasmic side. A helical transmembrane segment spans residues 238-258 (FSTCGSHMLAVTIFYGTLIFM). Topologically, residues 259–271 (YLQPSSSHALDTD) are extracellular. A helical membrane pass occupies residues 272-292 (KMASVFYTVIIPMLNPLIYSL). Over 293–309 (QNKEVKEALKKIIINKN) the chain is Cytoplasmic.

This sequence belongs to the G-protein coupled receptor 1 family.

It localises to the cell membrane. Odorant receptor. This is Olfactory receptor 8U1 (OR8U1) from Homo sapiens (Human).